Consider the following 435-residue polypeptide: Homoserine dehydrogenase (435 aa).

NADPH-binding residues include Thr-13, Val-14, Arg-43, and Lys-105. Position 14 (Val-14) interacts with NAD(+). 3 residues coordinate NADP(+): Val-14, Arg-43, and Lys-105. Residues Glu-129, Val-132, Gly-134, and Ile-136 each coordinate Na(+). The active-site Proton donor is Lys-204. Disordered regions lie at residues 255–274 (ARGV…TPDR) and 377–402 (RCDD…PDHV). Composition is skewed to basic and acidic residues over residues 262–274 (RAPD…TPDR) and 377–391 (RCDD…AERR).

It belongs to the homoserine dehydrogenase family. It depends on a metal cation as a cofactor.

The enzyme catalyses L-homoserine + NADP(+) = L-aspartate 4-semialdehyde + NADPH + H(+). It catalyses the reaction L-homoserine + NAD(+) = L-aspartate 4-semialdehyde + NADH + H(+). The protein operates within amino-acid biosynthesis; L-methionine biosynthesis via de novo pathway; L-homoserine from L-aspartate: step 3/3. Its pathway is amino-acid biosynthesis; L-threonine biosynthesis; L-threonine from L-aspartate: step 3/5. Its function is as follows. Catalyzes the conversion of L-aspartate-beta-semialdehyde (L-Asa) to L-homoserine (L-Hse), the third step in the biosynthesis of threonine and methionine from aspartate. This is Homoserine dehydrogenase (hom) from Methylobacillus glycogenes.